The following is a 347-amino-acid chain: Transcription termination/antitermination protein NusA (347 aa).

The S1 motif domain occupies 112–184 (GEIVAGVIQR…REPLITLSRT (73 aa)). Positions 287–347 (ARAARVVVPD…GVSRGMAHDR (61 aa)) constitute a KH domain. A disordered region spans residues 322–347 (DIRGDAPPPPPGQPEPGVSRGMAHDR).

It belongs to the NusA family. In terms of assembly, monomer. Binds directly to the core enzyme of the DNA-dependent RNA polymerase and to nascent RNA.

It is found in the cytoplasm. Its function is as follows. Participates in both transcription termination and antitermination. This Mycobacterium bovis (strain ATCC BAA-935 / AF2122/97) protein is Transcription termination/antitermination protein NusA.